Reading from the N-terminus, the 154-residue chain is Deoxyuridine 5'-triphosphate nucleotidohydrolase (154 aa).

Substrate-binding positions include 70–72, N83, 87–89, and M97; these read RSG and LID.

It belongs to the dUTPase family. Requires Mg(2+) as cofactor.

It catalyses the reaction dUTP + H2O = dUMP + diphosphate + H(+). The protein operates within pyrimidine metabolism; dUMP biosynthesis; dUMP from dCTP (dUTP route): step 2/2. Functionally, this enzyme is involved in nucleotide metabolism: it produces dUMP, the immediate precursor of thymidine nucleotides and it decreases the intracellular concentration of dUTP so that uracil cannot be incorporated into DNA. This Buchnera aphidicola subsp. Acyrthosiphon pisum (strain 5A) protein is Deoxyuridine 5'-triphosphate nucleotidohydrolase.